Here is a 534-residue protein sequence, read N- to C-terminus: NAD(P)H-quinone oxidoreductase chain 4 (534 aa).

Transmembrane regions (helical) follow at residues 12–32 (FPWLSASILFPIGSAFVIPFF), 44–64 (FALSIALITFLITVGSYINGF), 96–116 (MPLILLTSFITALAVLAAWPV), 120–140 (PKLFFFLILVMDGGQIAVFAV), 144–164 (LLFFLTWELELIPVYLLLAIW), 176–196 (FIIYTAGSSIFILLAALAMGF), 220–240 (ILCYVGLLIAFGVKLPIVPLH), 251–271 (TAPVHMLLAGILLKMGGYALL), 285–305 (FAPLLIVLGVVNIIYAALTSF), 314–334 (IAYSSISHMGFVLIGIGSFSS), 340–360 (AMLQMVSHGLIGASLFFLVGA), 384–404 (FALWTACSLASLALPGMSGFV), 425–445 (VVMASLAAIGVILTPIYLLSM), and 472–492 (VYIIACLLLPIIGIGLYPRLV).

Belongs to the complex I subunit 4 family.

Its subcellular location is the cellular thylakoid membrane. The catalysed reaction is a plastoquinone + NADH + (n+1) H(+)(in) = a plastoquinol + NAD(+) + n H(+)(out). It catalyses the reaction a plastoquinone + NADPH + (n+1) H(+)(in) = a plastoquinol + NADP(+) + n H(+)(out). NDH-1 shuttles electrons from NAD(P)H, via FMN and iron-sulfur (Fe-S) centers, to quinones in the respiratory chain. The immediate electron acceptor for the enzyme in this species is believed to be plastoquinone. Couples the redox reaction to proton translocation (for every two electrons transferred, four hydrogen ions are translocated across the cytoplasmic membrane), and thus conserves the redox energy in a proton gradient. The chain is NAD(P)H-quinone oxidoreductase chain 4 from Prochlorococcus marinus (strain AS9601).